Consider the following 343-residue polypeptide: Tetraacyldisaccharide 4'-kinase (343 aa).

An ATP-binding site is contributed by 51–58 (TVGGAGKT).

Belongs to the LpxK family.

It catalyses the reaction a lipid A disaccharide + ATP = a lipid IVA + ADP + H(+). Its pathway is glycolipid biosynthesis; lipid IV(A) biosynthesis; lipid IV(A) from (3R)-3-hydroxytetradecanoyl-[acyl-carrier-protein] and UDP-N-acetyl-alpha-D-glucosamine: step 6/6. Transfers the gamma-phosphate of ATP to the 4'-position of a tetraacyldisaccharide 1-phosphate intermediate (termed DS-1-P) to form tetraacyldisaccharide 1,4'-bis-phosphate (lipid IVA). This Xanthobacter autotrophicus (strain ATCC BAA-1158 / Py2) protein is Tetraacyldisaccharide 4'-kinase.